A 443-amino-acid polypeptide reads, in one-letter code: Glutamyl-tRNA reductase (443 aa).

Substrate contacts are provided by residues 49-52 (TCNR), Ser-109, 114-116 (EQQ), and Gln-120. The active-site Nucleophile is Cys-50. Residue 189-194 (GAGSMG) coordinates NADP(+).

It belongs to the glutamyl-tRNA reductase family. Homodimer.

It carries out the reaction (S)-4-amino-5-oxopentanoate + tRNA(Glu) + NADP(+) = L-glutamyl-tRNA(Glu) + NADPH + H(+). It participates in porphyrin-containing compound metabolism; protoporphyrin-IX biosynthesis; 5-aminolevulinate from L-glutamyl-tRNA(Glu): step 1/2. Functionally, catalyzes the NADPH-dependent reduction of glutamyl-tRNA(Glu) to glutamate 1-semialdehyde (GSA). The polypeptide is Glutamyl-tRNA reductase (Mycobacteroides abscessus (strain ATCC 19977 / DSM 44196 / CCUG 20993 / CIP 104536 / JCM 13569 / NCTC 13031 / TMC 1543 / L948) (Mycobacterium abscessus)).